A 153-amino-acid polypeptide reads, in one-letter code: Conglutin delta 2 (153 aa).

The N-terminal stretch at Met-1–Ala-22 is a signal peptide. Intrachain disulfides connect Cys-30/Cys-102, Cys-42/Cys-90, Cys-91/Cys-138, and Cys-104/Cys-146.

This sequence belongs to the 2S seed storage albumins family. Heterodimer of a small chain and a large chain; disulfide-linked. As to expression, expressed in developing cotyledons (at protein level).

It is found in the endoplasmic reticulum. The chain is Conglutin delta 2 from Lupinus angustifolius (Narrow-leaved blue lupine).